Reading from the N-terminus, the 59-residue chain is UPF0434 protein lpg1920 (59 aa).

It belongs to the UPF0434 family.

The polypeptide is UPF0434 protein lpg1920 (Legionella pneumophila subsp. pneumophila (strain Philadelphia 1 / ATCC 33152 / DSM 7513)).